The sequence spans 3955 residues: Nonribosomal peptide synthetase fmqA (3955 aa).

An adenylation 1 region spans residues 293–691 (SYSELETLSL…AQACCTIRNV (399 aa)). A Carrier 1 domain is found at 806-879 (THKETLIHQL…DLARLTDVVN (74 aa)). Residue serine 840 is modified to O-(pantetheine 4'-phosphoryl)serine. The segment at 916-1187 (QDIYPCTPLQ…IATVPLRVRL (272 aa)) is condensation 1. The tract at residues 1371 to 1766 (TYAELGELSD…DEVEKHVYQC (396 aa)) is adenylation 2. In terms of domain architecture, Carrier 2 spans 1880 to 1956 (EPTSVAEREM…KIMSHESSLS (77 aa)). Serine 1917 is modified (O-(pantetheine 4'-phosphoryl)serine). The tract at residues 1970 to 2261 (FALSPIQQMF…FTTMWPVVAE (292 aa)) is epimerase. The segment at 2438 to 2724 (EDIYPCSPSQ…FNPLPCRVHL (287 aa)) is condensation 2. An adenylation 3 region spans residues 2906-3299 (TYGQLDELSS…GEVEANVQHC (394 aa)). The Carrier 3 domain maps to 3422–3498 (APSTEEEKKL…DLAKVAVPKS (77 aa)). Position 3459 is an O-(pantetheine 4'-phosphoryl)serine (serine 3459). A condensation 3 region spans residues 3541 to 3805 (PGTQAQQFFI…CLNFIPLRVM (265 aa)).

Belongs to the NRP synthetase family. As to quaternary structure, interacts with the mitogen-activated protein kinase mpkA.

The protein resides in the cytoplasmic vesicle. It functions in the pathway alkaloid biosynthesis. Nonribosomal peptide synthetase; part of the gene cluster that mediates the biosynthesis of the antitumor fumiquinazolines that confer a dual-usage capability to defend against phagocytes in the environment and animal hosts. The simplest member is fumiquinazoline F (FQF) with a 6-6-6 tricyclic core derived from anthranilic acid (Ant), tryptophan (Trp), and alanine (Ala). The trimodular NRPS fmqA is responsible for FQF formation. Modules 1, 2 and 3 of fmqA are predicted to activate and load Ant, Trp and Ala, respectively, providing for the assembly of an Ant-Trp-Ala-S-enzyme intermediate that would undergo double cyclization for chain release and generation of the tricyclic 6-6-6 product fumiquinazoline F. The presence of an E domain predicted for module 2 of fmqA is consistent with epimerization of L-Trp to D-Trp during assembly to generate the R-stereocenter at C14 of FQF. The FAD-dependent monooxygenase fmqB and the monomodular NRPS fmqC then maturate FQF to FQA. FmqB oxidizes the 2',3'-double bond of the indole side chain of FQF, and fmqC activates L-Ala as the adenylate, installs it as the pantetheinyl thioester on its carrier protein domain, and acylates the oxidized indole for subsequent intramolecular cyclization to create the 6-5-5-imidazolindolone of FQA. The FAD-linked oxidoreductase fmqD introduces a third layer of scaffold complexity by converting FQA to the spirohemiaminal FQC, presumably by catalyzing the formation of a transient imine within the pyrazinone ring. FQC subsequently converts nonenzymatically to the known cyclic aminal FQD. This chain is Nonribosomal peptide synthetase fmqA, found in Aspergillus fumigatus (strain ATCC MYA-4609 / CBS 101355 / FGSC A1100 / Af293) (Neosartorya fumigata).